A 100-amino-acid polypeptide reads, in one-letter code: UPF0213 protein YhbQ (100 aa).

The 76-residue stretch at 2-77 (TPWFLYLIRT…KQLTKRQKER (76 aa)) folds into the GIY-YIG domain.

This sequence belongs to the UPF0213 family.

The chain is UPF0213 protein YhbQ from Escherichia coli O1:K1 / APEC.